A 211-amino-acid polypeptide reads, in one-letter code: Riboflavin kinase (211 aa).

The interval 1 to 81 (MKCIDRRLIG…DLLRYFNILS (81 aa)) is H-T-H motif-like. Residues 82 to 211 (IRLSGRVVSG…DRVEIEIYLE (130 aa)) form a riboflavin kinase region. Position 91-96 (91-96 (GLGEGA)) interacts with CDP. Thr120 and Asn122 together coordinate Mg(2+). 2 residues coordinate FMN: Thr177 and Glu185. 190–193 (FKLR) is a CDP binding site.

This sequence belongs to the archaeal riboflavin kinase family. The cofactor is Mg(2+).

The enzyme catalyses riboflavin + CTP = CDP + FMN + H(+). Its pathway is cofactor biosynthesis; FMN biosynthesis; FMN from riboflavin (CTP route): step 1/1. Catalyzes the CTP-dependent phosphorylation of riboflavin (vitamin B2) to form flavin mononucleotide (FMN). This is Riboflavin kinase (ribK) from Pyrobaculum islandicum (strain DSM 4184 / JCM 9189 / GEO3).